A 147-amino-acid chain; its full sequence is D-aminoacyl-tRNA deacylase (147 aa).

Positions 137-138 match the Gly-cisPro motif, important for rejection of L-amino acids motif; it reads GP.

This sequence belongs to the DTD family. Homodimer.

Its subcellular location is the cytoplasm. The enzyme catalyses glycyl-tRNA(Ala) + H2O = tRNA(Ala) + glycine + H(+). It carries out the reaction a D-aminoacyl-tRNA + H2O = a tRNA + a D-alpha-amino acid + H(+). An aminoacyl-tRNA editing enzyme that deacylates mischarged D-aminoacyl-tRNAs. Also deacylates mischarged glycyl-tRNA(Ala), protecting cells against glycine mischarging by AlaRS. Acts via tRNA-based rather than protein-based catalysis; rejects L-amino acids rather than detecting D-amino acids in the active site. By recycling D-aminoacyl-tRNA to D-amino acids and free tRNA molecules, this enzyme counteracts the toxicity associated with the formation of D-aminoacyl-tRNA entities in vivo and helps enforce protein L-homochirality. In Bacillus pumilus (strain SAFR-032), this protein is D-aminoacyl-tRNA deacylase.